The chain runs to 162 residues: Large ribosomal subunit protein uL10 (162 aa).

This sequence belongs to the universal ribosomal protein uL10 family. As to quaternary structure, part of the ribosomal stalk of the 50S ribosomal subunit. The N-terminus interacts with L11 and the large rRNA to form the base of the stalk. The C-terminus forms an elongated spine to which L12 dimers bind in a sequential fashion forming a multimeric L10(L12)X complex.

Its function is as follows. Forms part of the ribosomal stalk, playing a central role in the interaction of the ribosome with GTP-bound translation factors. This chain is Large ribosomal subunit protein uL10, found in Borrelia recurrentis (strain A1).